Here is a 679-residue protein sequence, read N- to C-terminus: Cysteine-rich receptor-like protein kinase 29 (679 aa).

Positions 1–23 (MEHVRVIFFFACFLTLAPFHAFA) are cleaved as a signal peptide. Residues 24-286 (QVDSYEFDPD…RTGKGKGGSK (263 aa)) lie on the Extracellular side of the membrane. 2 Gnk2-homologous domains span residues 30–134 (FDPD…NRTI) and 140–249 (TNPT…TWRF). Residues Asn41, Asn45, Asn71, Asn107, Asn131, and Asn187 are each glycosylated (N-linked (GlcNAc...) asparagine). A disordered region spans residues 260–281 (PPAIQPADSPQSAARTERTGKG). A helical transmembrane segment spans residues 287-307 (VIIAIVIPILLVALLAICLCL). Residues 308–679 (VLKWRKNKSG…DVTVSEFSPR (372 aa)) lie on the Cytoplasmic side of the membrane. The region spanning 357 to 637 (FSSENELGRG…SLMLNSYSFT (281 aa)) is the Protein kinase domain. ATP is bound by residues 363–371 (LGRGGFGSV) and Lys385. Tyr430 bears the Phosphotyrosine mark. Residue Asp482 is the Proton acceptor of the active site. A Phosphoserine modification is found at Ser486. The residue at position 524 (Thr524) is a Phosphothreonine. Tyr532 carries the phosphotyrosine modification. A disordered region spans residues 659 to 679 (SSTEGLQMSSNDVTVSEFSPR).

Belongs to the protein kinase superfamily. Ser/Thr protein kinase family. CRK subfamily.

The protein localises to the membrane. The enzyme catalyses L-seryl-[protein] + ATP = O-phospho-L-seryl-[protein] + ADP + H(+). It catalyses the reaction L-threonyl-[protein] + ATP = O-phospho-L-threonyl-[protein] + ADP + H(+). The sequence is that of Cysteine-rich receptor-like protein kinase 29 (CRK29) from Arabidopsis thaliana (Mouse-ear cress).